The primary structure comprises 537 residues: MAKYIFVTGGVVSSLGKGITAASLGRLLKSRGLSVAMQKFDPYINIDPGTMSPYQHGEVFVTEDGAETDLDLGHYERFIDVNLTKNSNVTAGKIYWSVITKERKGDYLGATVQVIPHITDEIKERVYRVAKEKNVDVVITEIGGTVGDIESLPFLEAIRQVAIEQGRENVMFIHVTLVPHLGNTGELKTKPTQHSVKELRSIGIQPDMIVCRTELPLPQELREKIALFCNVSVEAVIENRDVESIYQVPLELERQKVDEYVIKRLNLPLGQSDLKEWREYVEKEKNPEHQVEVALVGKYVDLHDAYISVVEALKHAGVYHKTAVNIRWVNAEKVNDKTVDELLKGADGILVPGGFGDRGIEGKIRAIQYARENKIPYLGLCLGMQCAVIEFARNVAGLKGANSTEFDPNTPHPVIDLMPEQKDIDEKGGTMRLGVYPCKVIEGTKAYEVYKDELVYERHRHRYEFNNQYRELLTSKGLVISGLSPDERLVEIIELKDHPYFVATQFHPEFKSRPLNPHPLFRDFVKAMLNLKINNAE.

The amidoligase domain stretch occupies residues 1 to 267; that stretch reads MAKYIFVTGG…DEYVIKRLNL (267 aa). Serine 13 is a CTP binding site. Residue serine 13 participates in UTP binding. 14-19 lines the ATP pocket; it reads SLGKGI. Tyrosine 54 serves as a coordination point for L-glutamine. Aspartate 71 is a binding site for ATP. Residues aspartate 71 and glutamate 141 each coordinate Mg(2+). CTP-binding positions include 148-150, 188-193, and lysine 224; these read DIE and KTKPTQ. Residues 188–193 and lysine 224 each bind UTP; that span reads KTKPTQ. 240-242 contributes to the ATP binding site; that stretch reads RDV. A Glutamine amidotransferase type-1 domain is found at 292 to 534; it reads EVALVGKYVD…VKAMLNLKIN (243 aa). Glycine 354 lines the L-glutamine pocket. The active-site Nucleophile; for glutamine hydrolysis is the cysteine 381. Residues 382 to 385, glutamate 405, and arginine 462 contribute to the L-glutamine site; that span reads LGMQ. Catalysis depends on residues histidine 507 and glutamate 509.

This sequence belongs to the CTP synthase family. In terms of assembly, homotetramer.

It carries out the reaction UTP + L-glutamine + ATP + H2O = CTP + L-glutamate + ADP + phosphate + 2 H(+). It catalyses the reaction L-glutamine + H2O = L-glutamate + NH4(+). The enzyme catalyses UTP + NH4(+) + ATP = CTP + ADP + phosphate + 2 H(+). The protein operates within pyrimidine metabolism; CTP biosynthesis via de novo pathway; CTP from UDP: step 2/2. With respect to regulation, allosterically activated by GTP, when glutamine is the substrate; GTP has no effect on the reaction when ammonia is the substrate. The allosteric effector GTP functions by stabilizing the protein conformation that binds the tetrahedral intermediate(s) formed during glutamine hydrolysis. Inhibited by the product CTP, via allosteric rather than competitive inhibition. Functionally, catalyzes the ATP-dependent amination of UTP to CTP with either L-glutamine or ammonia as the source of nitrogen. Regulates intracellular CTP levels through interactions with the four ribonucleotide triphosphates. The sequence is that of CTP synthase from Caldanaerobacter subterraneus subsp. tengcongensis (strain DSM 15242 / JCM 11007 / NBRC 100824 / MB4) (Thermoanaerobacter tengcongensis).